The primary structure comprises 280 residues: Myb family transcription factor PHL11 (280 aa).

One can recognise an HTH myb-type domain in the interval 20-80 (RDPKPRLRWT…HLQKYRLGQQ (61 aa)). Residues 51–76 (PKSVLKLMGLKGLTLYHLKSHLQKYR) constitute a DNA-binding region (H-T-H motif). Residues 77–98 (LGQQQGKKQNRTEQNKENAGSS) are disordered. The coiled coil stretch occupies residues 129–149 (AEAMRHQVDAQQRFQEQLEVQ). Positions 142–147 (FQEQLE) match the LHEQLE motif.

The protein belongs to the MYB-CC family.

Its subcellular location is the nucleus. This Arabidopsis thaliana (Mouse-ear cress) protein is Myb family transcription factor PHL11.